Here is an 875-residue protein sequence, read N- to C-terminus: Valine--tRNA ligase (875 aa).

The short motif at 44-54 is the 'HIGH' region element; that stretch reads PNVTGKLHLGH. The short motif at 520–524 is the 'KMSKS' region element; sequence KMSKS. ATP is bound at residue K523. Residues 804–875 adopt a coiled-coil conformation; that stretch reads LEGLINIEEE…VRARLAQLKQ (72 aa).

Belongs to the class-I aminoacyl-tRNA synthetase family. ValS type 1 subfamily. As to quaternary structure, monomer.

It is found in the cytoplasm. The catalysed reaction is tRNA(Val) + L-valine + ATP = L-valyl-tRNA(Val) + AMP + diphosphate. Functionally, catalyzes the attachment of valine to tRNA(Val). As ValRS can inadvertently accommodate and process structurally similar amino acids such as threonine, to avoid such errors, it has a 'posttransfer' editing activity that hydrolyzes mischarged Thr-tRNA(Val) in a tRNA-dependent manner. This Anoxybacillus flavithermus (strain DSM 21510 / WK1) protein is Valine--tRNA ligase.